Here is a 1174-residue protein sequence, read N- to C-terminus: DNA-directed RNA polymerase subunit beta' (1174 aa).

Residues Cys-60, Cys-62, Cys-75, and Cys-78 each contribute to the Zn(2+) site. Asp-450, Asp-452, and Asp-454 together coordinate Mg(2+). Positions 795, 869, 876, and 879 each coordinate Zn(2+).

The protein belongs to the RNA polymerase beta' chain family. As to quaternary structure, the RNAP catalytic core consists of 2 alpha, 1 beta, 1 beta' and 1 omega subunit. When a sigma factor is associated with the core the holoenzyme is formed, which can initiate transcription. The cofactor is Mg(2+). Zn(2+) is required as a cofactor.

The catalysed reaction is RNA(n) + a ribonucleoside 5'-triphosphate = RNA(n+1) + diphosphate. Functionally, DNA-dependent RNA polymerase catalyzes the transcription of DNA into RNA using the four ribonucleoside triphosphates as substrates. The chain is DNA-directed RNA polymerase subunit beta' from Clostridium kluyveri (strain ATCC 8527 / DSM 555 / NBRC 12016 / NCIMB 10680 / K1).